The chain runs to 213 residues: Orotate phosphoribosyltransferase (213 aa).

Lys-26 contacts 5-phospho-alpha-D-ribose 1-diphosphate. 34–35 lines the orotate pocket; sequence FF. Residues 72-73, Arg-99, Lys-100, Lys-103, His-105, and 124-132 contribute to the 5-phospho-alpha-D-ribose 1-diphosphate site; these read YK and DDVITAGTA. Orotate contacts are provided by Thr-128 and Arg-156.

The protein belongs to the purine/pyrimidine phosphoribosyltransferase family. PyrE subfamily. As to quaternary structure, homodimer. The cofactor is Mg(2+).

It catalyses the reaction orotidine 5'-phosphate + diphosphate = orotate + 5-phospho-alpha-D-ribose 1-diphosphate. The protein operates within pyrimidine metabolism; UMP biosynthesis via de novo pathway; UMP from orotate: step 1/2. Its function is as follows. Catalyzes the transfer of a ribosyl phosphate group from 5-phosphoribose 1-diphosphate to orotate, leading to the formation of orotidine monophosphate (OMP). The chain is Orotate phosphoribosyltransferase from Pseudomonas putida (strain GB-1).